A 245-amino-acid chain; its full sequence is Large ribosomal subunit protein uL3 (245 aa).

An N5-methylglutamine modification is found at Q152. Residues 224–245 are disordered; the sequence is RSKAVQAEAAAPAEAAAPEGDN. The segment covering 230–245 has biased composition (low complexity); it reads AEAAAPAEAAAPEGDN.

Belongs to the universal ribosomal protein uL3 family. As to quaternary structure, part of the 50S ribosomal subunit. Forms a cluster with proteins L14 and L19. Post-translationally, methylated by PrmB.

Functionally, one of the primary rRNA binding proteins, it binds directly near the 3'-end of the 23S rRNA, where it nucleates assembly of the 50S subunit. This chain is Large ribosomal subunit protein uL3, found in Paracoccus denitrificans (strain Pd 1222).